We begin with the raw amino-acid sequence, 190 residues long: Adenine phosphoribosyltransferase (190 aa).

The protein belongs to the purine/pyrimidine phosphoribosyltransferase family. As to quaternary structure, homodimer.

It localises to the cytoplasm. The catalysed reaction is AMP + diphosphate = 5-phospho-alpha-D-ribose 1-diphosphate + adenine. The protein operates within purine metabolism; AMP biosynthesis via salvage pathway; AMP from adenine: step 1/1. Functionally, catalyzes a salvage reaction resulting in the formation of AMP, that is energically less costly than de novo synthesis. The protein is Adenine phosphoribosyltransferase of Treponema pallidum (strain Nichols).